A 979-amino-acid chain; its full sequence is Pro-apoptotic serine protease NMA111 (979 aa).

The segment at 1-20 (MTIMNEGKKRSHSSSSDDHL) is disordered. The segment at 65–255 (VVSIHFAQVA…LPLDRILRAL (191 aa)) is serine protease. Catalysis depends on charge relay system residues His103, Asp134, and Ser217. PDZ domains are found at residues 273 to 361 (WLLK…RGGT) and 750 to 836 (SILH…VRDG).

Belongs to the peptidase S1C family.

It is found in the nucleus. Functionally, nuclear serine protease which mediates apoptosis. The sequence is that of Pro-apoptotic serine protease NMA111 (NMA111) from Candida glabrata (strain ATCC 2001 / BCRC 20586 / JCM 3761 / NBRC 0622 / NRRL Y-65 / CBS 138) (Yeast).